The sequence spans 130 residues: Phosphoribosyl-AMP cyclohydrolase (130 aa).

Asp-77 is a Mg(2+) binding site. Cys-78 serves as a coordination point for Zn(2+). Mg(2+) contacts are provided by Asp-79 and Asp-81. 2 residues coordinate Zn(2+): Cys-95 and Cys-102.

Belongs to the PRA-CH family. Homodimer. Mg(2+) serves as cofactor. Zn(2+) is required as a cofactor.

Its subcellular location is the cytoplasm. The catalysed reaction is 1-(5-phospho-beta-D-ribosyl)-5'-AMP + H2O = 1-(5-phospho-beta-D-ribosyl)-5-[(5-phospho-beta-D-ribosylamino)methylideneamino]imidazole-4-carboxamide. It participates in amino-acid biosynthesis; L-histidine biosynthesis; L-histidine from 5-phospho-alpha-D-ribose 1-diphosphate: step 3/9. Its function is as follows. Catalyzes the hydrolysis of the adenine ring of phosphoribosyl-AMP. The chain is Phosphoribosyl-AMP cyclohydrolase from Pseudomonas syringae pv. syringae (strain B728a).